The primary structure comprises 228 residues: UPF0758 protein stu1465 (228 aa).

The 123-residue stretch at 103 to 225 (QIMSSQQVAR…YYSFREERED (123 aa)) folds into the MPN domain. Residues histidine 174, histidine 176, and aspartate 187 each coordinate Zn(2+). Positions 174 to 187 (HNHPSGEAYPSRND) match the JAMM motif motif.

This sequence belongs to the UPF0758 family.

The polypeptide is UPF0758 protein stu1465 (Streptococcus thermophilus (strain ATCC BAA-250 / LMG 18311)).